Here is a 353-residue protein sequence, read N- to C-terminus: uncharacterized protein (353 aa).

9 helical membrane-spanning segments follow: residues Ala16–Gly36, Val77–Leu97, Tyr106–Leu128, Ser140–Ala160, Leu167–Ala187, Gly208–Ile228, Leu263–Pro283, His296–Ser316, and Ile323–Leu343.

Belongs to the binding-protein-dependent transport system permease family. FecCD subfamily. The complex is composed of two ATP-binding proteins (YvrA), two transmembrane proteins (YvrB) and a solute-binding protein (YvrC).

Its subcellular location is the cell membrane. Functionally, probably part of an ABC transporter complex. Probably responsible for the translocation of the substrate across the membrane. This is an uncharacterized protein from Bacillus subtilis (strain 168).